The chain runs to 88 residues: Small ribosomal subunit protein bS20 (88 aa).

Over residues 1–17 the composition is skewed to basic and acidic residues; sequence MANIKSNEKRLRQDIKR. Residues 1 to 25 form a disordered region; that stretch reads MANIKSNEKRLRQDIKRNLNNKGQK.

It belongs to the bacterial ribosomal protein bS20 family.

Functionally, binds directly to 16S ribosomal RNA. The polypeptide is Small ribosomal subunit protein bS20 (Mycoplasma genitalium (strain ATCC 33530 / DSM 19775 / NCTC 10195 / G37) (Mycoplasmoides genitalium)).